A 242-amino-acid chain; its full sequence is Type III pantothenate kinase (242 aa).

7-14 (DLGNSRFK) contributes to the ATP binding site. Residues tyrosine 91 and 98 to 101 (GVDR) each bind substrate. Aspartate 100 (proton acceptor) is an active-site residue. Residue threonine 121 coordinates ATP. Residue threonine 171 participates in substrate binding.

This sequence belongs to the type III pantothenate kinase family. As to quaternary structure, homodimer. NH4(+) serves as cofactor. K(+) is required as a cofactor.

The protein resides in the cytoplasm. It catalyses the reaction (R)-pantothenate + ATP = (R)-4'-phosphopantothenate + ADP + H(+). Its pathway is cofactor biosynthesis; coenzyme A biosynthesis; CoA from (R)-pantothenate: step 1/5. Catalyzes the phosphorylation of pantothenate (Pan), the first step in CoA biosynthesis. In Xanthomonas campestris pv. campestris (strain 8004), this protein is Type III pantothenate kinase.